The following is a 166-amino-acid chain: Regulatory protein RecX (166 aa).

This sequence belongs to the RecX family.

The protein resides in the cytoplasm. Functionally, modulates RecA activity. This is Regulatory protein RecX from Salmonella paratyphi A (strain ATCC 9150 / SARB42).